We begin with the raw amino-acid sequence, 464 residues long: Probable mannosyltransferase KTR4 (464 aa).

At 1-11 (MRFLSKRILKP) the chain is on the cytoplasmic side. The chain crosses the membrane as a helical; Signal-anchor for type II membrane protein span at residues 12–32 (VLSVIILISIAVTVVLYFLTA). A stem region region spans residues 33–130 (NENYLQAVKD…NLVRSGDPLA (98 aa)). Residues 33 to 464 (NENYLQAVKD…SMSEEELEMY (432 aa)) lie on the Lumenal side of the membrane. Residues 131–464 (GKAKGTILSL…SMSEEELEMY (334 aa)) are catalytic. Residue Glu352 is the Nucleophile of the active site.

The protein belongs to the glycosyltransferase 15 family.

It is found in the membrane. In terms of biological role, possible glycosyltransferase that transfers an alpha-D-mannosyl residue from GDP-mannose into lipid-linked oligosaccharide, forming an alpha-(1-&gt;2)-D-mannosyl-D-mannose linkage. The sequence is that of Probable mannosyltransferase KTR4 (KTR4) from Saccharomyces cerevisiae (strain ATCC 204508 / S288c) (Baker's yeast).